A 334-amino-acid polypeptide reads, in one-letter code: Phosphoribosylformylglycinamidine cyclo-ligase (334 aa).

This sequence belongs to the AIR synthase family.

The protein resides in the cytoplasm. It catalyses the reaction 2-formamido-N(1)-(5-O-phospho-beta-D-ribosyl)acetamidine + ATP = 5-amino-1-(5-phospho-beta-D-ribosyl)imidazole + ADP + phosphate + H(+). The protein operates within purine metabolism; IMP biosynthesis via de novo pathway; 5-amino-1-(5-phospho-D-ribosyl)imidazole from N(2)-formyl-N(1)-(5-phospho-D-ribosyl)glycinamide: step 2/2. The polypeptide is Phosphoribosylformylglycinamidine cyclo-ligase (Pyrococcus horikoshii (strain ATCC 700860 / DSM 12428 / JCM 9974 / NBRC 100139 / OT-3)).